The chain runs to 86 residues: Anti-adapter protein IraP (86 aa).

Residues 1–36 are a coiled coil; that stretch reads MKNLIAELLFKLAQKEEESKELCAQVEALEIIVTAM.

This sequence belongs to the IraP family. Interacts with RssB.

It is found in the cytoplasm. Its function is as follows. Inhibits RpoS proteolysis by regulating RssB activity, thereby increasing the stability of the sigma stress factor RpoS especially during phosphate starvation, but also in stationary phase and during nitrogen starvation. Its effect on RpoS stability is due to its interaction with RssB, which probably blocks the interaction of RssB with RpoS, and the consequent delivery of the RssB-RpoS complex to the ClpXP protein degradation pathway. The protein is Anti-adapter protein IraP of Escherichia coli O7:K1 (strain IAI39 / ExPEC).